A 248-amino-acid chain; its full sequence is 4-hydroxy-tetrahydrodipicolinate reductase (248 aa).

NAD(+) is bound by residues 9–14 (GAKGRV), 77–79 (GTT), and 104–107 (APNF). The active-site Proton donor/acceptor is the His-134. His-135 is a (S)-2,3,4,5-tetrahydrodipicolinate binding site. Lys-138 functions as the Proton donor in the catalytic mechanism. 144–145 (GT) contacts (S)-2,3,4,5-tetrahydrodipicolinate.

The protein belongs to the DapB family.

The protein resides in the cytoplasm. The enzyme catalyses (S)-2,3,4,5-tetrahydrodipicolinate + NAD(+) + H2O = (2S,4S)-4-hydroxy-2,3,4,5-tetrahydrodipicolinate + NADH + H(+). It carries out the reaction (S)-2,3,4,5-tetrahydrodipicolinate + NADP(+) + H2O = (2S,4S)-4-hydroxy-2,3,4,5-tetrahydrodipicolinate + NADPH + H(+). It participates in amino-acid biosynthesis; L-lysine biosynthesis via DAP pathway; (S)-tetrahydrodipicolinate from L-aspartate: step 4/4. Catalyzes the conversion of 4-hydroxy-tetrahydrodipicolinate (HTPA) to tetrahydrodipicolinate. This is 4-hydroxy-tetrahydrodipicolinate reductase from Corynebacterium glutamicum (strain ATCC 13032 / DSM 20300 / JCM 1318 / BCRC 11384 / CCUG 27702 / LMG 3730 / NBRC 12168 / NCIMB 10025 / NRRL B-2784 / 534).